The chain runs to 78 residues: Acyl carrier protein (78 aa).

The region spanning 1 to 76 is the Carrier domain; it reads MAIHPKVKDI…DVASYLEKKG (76 aa). Ser36 carries the post-translational modification O-(pantetheine 4'-phosphoryl)serine.

The protein belongs to the acyl carrier protein (ACP) family. Post-translationally, 4'-phosphopantetheine is transferred from CoA to a specific serine of apo-ACP by AcpS. This modification is essential for activity because fatty acids are bound in thioester linkage to the sulfhydryl of the prosthetic group.

It is found in the cytoplasm. It participates in lipid metabolism; fatty acid biosynthesis. Functionally, carrier of the growing fatty acid chain in fatty acid biosynthesis. This is Acyl carrier protein from Bdellovibrio bacteriovorus (strain ATCC 15356 / DSM 50701 / NCIMB 9529 / HD100).